The following is a 412-amino-acid chain: WW domain-containing oxidoreductase (412 aa).

Positions 1–24 are disordered; that stretch reads MAALKYAGMEDTDSEDELPPGWEE. A WW 1 domain is found at 16 to 49; sequence DELPPGWEERSTKDGWVYYANHEEMKTQWEHPKT. The Nuclear localization signal motif lies at 50–55; the sequence is GKKKRC. Residues 57–90 enclose the WW 2 domain; the sequence is GALPYGWEQETDDKGQIFYVDHINKRKTYFDPRQ. 128 to 134 is an NADP(+) binding site; that stretch reads GANSGIG. Ser257 is a substrate binding site. Tyr290 (proton acceptor) is an active-site residue.

This sequence belongs to the short-chain dehydrogenases/reductases (SDR) family.

Its subcellular location is the cytoplasm. It is found in the mitochondrion. The protein localises to the golgi apparatus. The protein resides in the lysosome. Its function is as follows. Putative oxidoreductase. Acts as a tumor suppressor and plays a role in apoptosis. May function synergistically with p53/TP53 to control genotoxic stress-induced cell death. Plays a role in TGFB1 signaling and TGFB1-mediated cell death. May also play a role in tumor necrosis factor (TNF)-mediated cell death. Required for normal bone development. Inhibits Wnt signaling. This Danio rerio (Zebrafish) protein is WW domain-containing oxidoreductase (wwox).